The chain runs to 376 residues: Sulfate/thiosulfate import ATP-binding protein CysA 1 (376 aa).

The 235-residue stretch at 3–237 (IRLTNISKKF…PNSRFVFDFL (235 aa)) folds into the ABC transporter domain. ATP is bound at residue 35 to 42 (GPSGSGKT).

It belongs to the ABC transporter superfamily. Sulfate/tungstate importer (TC 3.A.1.6) family. The complex is composed of two ATP-binding proteins (CysA), two transmembrane proteins (CysT and CysW) and a solute-binding protein (CysP).

Its subcellular location is the cell inner membrane. It catalyses the reaction sulfate(out) + ATP + H2O = sulfate(in) + ADP + phosphate + H(+). The catalysed reaction is thiosulfate(out) + ATP + H2O = thiosulfate(in) + ADP + phosphate + H(+). Part of the ABC transporter complex CysAWTP involved in sulfate/thiosulfate import. Responsible for energy coupling to the transport system. The chain is Sulfate/thiosulfate import ATP-binding protein CysA 1 from Shewanella oneidensis (strain ATCC 700550 / JCM 31522 / CIP 106686 / LMG 19005 / NCIMB 14063 / MR-1).